Here is a 356-residue protein sequence, read N- to C-terminus: Arginine kinase 1 (356 aa).

One can recognise a Phosphagen kinase N-terminal domain in the interval 6–91 (VLAKLEEGYA…FDPIIEDYHG (86 aa)). 64–68 (GVGIY) contacts substrate. The Phosphagen kinase C-terminal domain occupies 119–356 (YVISTRVRCG…TELIKLEKSL (238 aa)). ATP is bound by residues 122-126 (STRVR) and His-185. Residue Glu-225 coordinates substrate. Arg-229 is an ATP binding site. Cys-271 contributes to the substrate binding site. ATP contacts are provided by residues 280–284 (RASVH) and 309–314 (RGTRGE). Glu-314 lines the substrate pocket.

Belongs to the ATP:guanido phosphotransferase family.

It carries out the reaction L-arginine + ATP = N(omega)-phospho-L-arginine + ADP + H(+). The polypeptide is Arginine kinase 1 (Drosophila melanogaster (Fruit fly)).